Here is a 418-residue protein sequence, read N- to C-terminus: Putative ion-transport protein YfeO (418 aa).

The next 12 membrane-spanning stretches (helical) occupy residues 10–30, 54–74, 99–119, 120–140, 149–169, 186–206, 223–243, 258–278, 300–320, 322–342, 343–363, and 371–391; these read LLLSLPAVAIGIASSLILIVV, DSPLWIIGVLTLTGIAVGLVI, ALPGLIVALILGLAGGVSLGP, EHPIMTVNIALAVAIGARLLP, ILASAGTIGALFGTPVAAALI, LFAPLMAAAAGALTTGLFFHP, ILSGAIVAAIAIAAGMVAVWC, VLVLGIGGFILGILGVIGGPV, DYFLLAVIKLAALVVAAASGF, GGRIFPAVFVGVALGLMLHEH, VPAVPAAITVSCAILGIVLVV, and LFMAAVVVPNTTLLPLLCIVM.

This sequence belongs to the chloride channel (TC 2.A.49) family.

The protein resides in the cell membrane. The sequence is that of Putative ion-transport protein YfeO from Shigella boydii serotype 18 (strain CDC 3083-94 / BS512).